Reading from the N-terminus, the 163-residue chain is Phosphopantetheine adenylyltransferase (163 aa).

Thr-10 contributes to the substrate binding site. ATP is bound by residues 10–11 (TF) and His-18. Substrate is bound by residues Lys-42, Leu-74, and Arg-88. Residues 89–91 (GLR), Glu-99, and 124–130 (NSFISST) contribute to the ATP site.

This sequence belongs to the bacterial CoaD family. In terms of assembly, homohexamer. Mg(2+) serves as cofactor.

It is found in the cytoplasm. The enzyme catalyses (R)-4'-phosphopantetheine + ATP + H(+) = 3'-dephospho-CoA + diphosphate. It functions in the pathway cofactor biosynthesis; coenzyme A biosynthesis; CoA from (R)-pantothenate: step 4/5. Reversibly transfers an adenylyl group from ATP to 4'-phosphopantetheine, yielding dephospho-CoA (dPCoA) and pyrophosphate. This is Phosphopantetheine adenylyltransferase from Shewanella oneidensis (strain ATCC 700550 / JCM 31522 / CIP 106686 / LMG 19005 / NCIMB 14063 / MR-1).